Consider the following 262-residue polypeptide: Carbonic anhydrase 1 (262 aa).

Ala-2 carries the post-translational modification N-acetylalanine. One can recognise an Alpha-carbonic anhydrase domain in the interval 4–261; the sequence is LNWSYEGENG…LKGRQVKASF (258 aa). The active-site Proton donor/acceptor is the His-65. Zn(2+) contacts are provided by His-95, His-97, and His-120. Substrate contacts are provided by residues Thr-200 and 200–201; that span reads TH.

This sequence belongs to the alpha-carbonic anhydrase family. The cofactor is Zn(2+).

The protein resides in the cytoplasm. The catalysed reaction is hydrogencarbonate + H(+) = CO2 + H2O. The enzyme catalyses urea = cyanamide + H2O. Its activity is regulated as follows. Inhibited by acetazolamide. Its function is as follows. Catalyzes the reversible hydration of carbon dioxide. Can hydrate cyanamide to urea. The sequence is that of Carbonic anhydrase 1 (CA1) from Monodelphis domestica (Gray short-tailed opossum).